A 909-amino-acid chain; its full sequence is Tubulin polyglutamylase TTLL7 (909 aa).

A TTL domain is found at 40–392; it reads NGAITANVVG…RASDKKKNLA (353 aa). ATP-binding positions include Lys162, 168–169, 190–193, and 203–205; these read MG, QEYL, and KFD. L-glutamate is bound at residue Arg229. An ATP-binding site is contributed by 251-252; the sequence is TN. L-glutamate is bound by residues Tyr253, Ser254, and Lys273. Asp338, Glu351, and Asn353 together coordinate Mg(2+). Residue Lys369 participates in L-glutamate binding. Residues 390 to 452 are c-MTBD region; the sequence is NLAKQKAEAQ…ISREEYENRH (63 aa). Disordered stretches follow at residues 517–580 and 603–688; these read DEKL…KVSY and KAAR…PSIS. The segment covering 518–531 has biased composition (basic and acidic residues); sequence EKLSGKPTRPKEPR. A compositionally biased stretch (polar residues) spans 532–542; it reads TLSSMPESTQT. A compositionally biased stretch (low complexity) spans 548 to 562; sequence NYSSHSSSNSTGSSS. Over residues 571 to 580 the composition is skewed to basic and acidic residues; sequence KEGKEKKVSY. The span at 604-625 shows a compositional bias: low complexity; the sequence is AARPFSNSSSPSSAASMRRSVS. The segment covering 626-657 has biased composition (polar residues); that stretch reads CPRSITALNTQSPTTDQRPFSSRISSTITRPL. The segment covering 658 to 673 has biased composition (low complexity); that stretch reads SGNRTNSLNRSSSSNR. Residues 674-688 show a composition bias toward polar residues; it reads VPQSGTSGSVYPSIS.

Belongs to the tubulin--tyrosine ligase family. Interacts with both alpha- and beta-tubulin (via C-terminal tubulin tails). Mg(2+) is required as a cofactor.

The protein localises to the cell projection. It is found in the cilium. Its subcellular location is the cytoplasm. It localises to the cytoskeleton. The protein resides in the cilium basal body. The protein localises to the dendrite. It is found in the perikaryon. It catalyses the reaction L-glutamyl-[protein] + L-glutamate + ATP = gamma-L-glutamyl-L-glutamyl-[protein] + ADP + phosphate + H(+). The enzyme catalyses (L-glutamyl)(n)-gamma-L-glutamyl-L-glutamyl-[protein] + L-glutamate + ATP = (L-glutamyl)(n+1)-gamma-L-glutamyl-L-glutamyl-[protein] + ADP + phosphate + H(+). In terms of biological role, polyglutamylase which modifies tubulin, generating polyglutamate side chains of variable lengths on the gamma-carboxyl group of specific glutamate residues within the C-terminal tail of tubulin. Mediates both ATP-dependent initiation and elongation steps of the polyglutamylation reaction. Preferentially modifies the beta-tubulin tail over an alpha-tail. Competes with monoglycylase TTLL3 for modification site on beta-tubulin substrate, thereby creating an anticorrelation between glycylation and glutamylation reactions. The protein is Tubulin polyglutamylase TTLL7 of Xenopus tropicalis (Western clawed frog).